The sequence spans 98 residues: Putative protein adenylyltransferase MJ1217 (98 aa).

Positions Gly31–Asp45 match the GSX(10)DXD motif motif. Mg(2+) is bound by residues Asp43, Asp45, and Asp75.

Belongs to the MntA antitoxin family. As to quaternary structure, probably forms a complex with cognate toxin MJ1216. Requires Mg(2+) as cofactor.

It catalyses the reaction L-tyrosyl-[protein] + ATP = O-(5'-adenylyl)-L-tyrosyl-[protein] + diphosphate. It carries out the reaction O-(5'-adenylyl)-L-tyrosyl-[protein] + ATP = O-[5'-(adenylyl-(5'-&gt;3')-adenylyl)]-L-tyrosyl-[protein] + diphosphate. In terms of biological role, probable antitoxin component of a putative type VII toxin-antitoxin (TA) system. Neutralizes cognate toxic MJ1216 by di-AMPylation. This Methanocaldococcus jannaschii (strain ATCC 43067 / DSM 2661 / JAL-1 / JCM 10045 / NBRC 100440) (Methanococcus jannaschii) protein is Putative protein adenylyltransferase MJ1217.